Here is a 116-residue protein sequence, read N- to C-terminus: Hydrogenase maturation factor HypA (116 aa).

Residue His2 coordinates Ni(2+). Zn(2+)-binding residues include Cys73, Cys76, Cys90, and Cys93.

This sequence belongs to the HypA/HybF family.

Functionally, involved in the maturation of [NiFe] hydrogenases. Required for nickel insertion into the metal center of the hydrogenase. The polypeptide is Hydrogenase maturation factor HypA (Escherichia coli O157:H7).